A 425-amino-acid polypeptide reads, in one-letter code: Gamma-glutamyl phosphate reductase (425 aa).

This sequence belongs to the gamma-glutamyl phosphate reductase family.

It is found in the cytoplasm. The catalysed reaction is L-glutamate 5-semialdehyde + phosphate + NADP(+) = L-glutamyl 5-phosphate + NADPH + H(+). It participates in amino-acid biosynthesis; L-proline biosynthesis; L-glutamate 5-semialdehyde from L-glutamate: step 2/2. In terms of biological role, catalyzes the NADPH-dependent reduction of L-glutamate 5-phosphate into L-glutamate 5-semialdehyde and phosphate. The product spontaneously undergoes cyclization to form 1-pyrroline-5-carboxylate. In Novosphingobium aromaticivorans (strain ATCC 700278 / DSM 12444 / CCUG 56034 / CIP 105152 / NBRC 16084 / F199), this protein is Gamma-glutamyl phosphate reductase.